The sequence spans 764 residues: Subtilisin-like protease SBT1.6 (764 aa).

A signal peptide spans 1-20 (MASSTIVLLLFLSFPFISFA). The region spanning 46 to 99 (HWYSTEFAEESRIVHVYHTVFHGFSAVVTPDEADNLRNHPAVLAVFEDRRRELH) is the Inhibitor I9 domain. A Peptidase S8 domain is found at 103–606 (SPQFLGLQNQ…SGHLNLGRAM (504 aa)). The Charge relay system role is filled by Asp131. Residue Asn191 is glycosylated (N-linked (GlcNAc...) asparagine). His205 functions as the Charge relay system in the catalytic mechanism. The region spanning 377–457 (SSASLCMENT…NEGDRIKAYA (81 aa)) is the PA domain. Catalysis depends on Ser538, which acts as the Charge relay system. Asn578 is a glycosylation site (N-linked (GlcNAc...) asparagine).

The protein belongs to the peptidase S8 family. Expressed in roots, leaves and flowers of mature plants.

The sequence is that of Subtilisin-like protease SBT1.6 from Arabidopsis thaliana (Mouse-ear cress).